The primary structure comprises 225 residues: Protein ERP3 (225 aa).

An N-terminal signal peptide occupies residues methionine 1 to proline 23. The Lumenal portion of the chain corresponds to leucine 24 to serine 195. The 140-residue stretch at lysine 33–tyrosine 172 folds into the GOLD domain. The span at glutamate 129 to arginine 138 shows a compositional bias: basic residues. Residues glutamate 129–glutamine 149 form a disordered region. A helical transmembrane segment spans residues isoleucine 196 to isoleucine 216. Residues phenylalanine 217–valine 225 are Cytoplasmic-facing.

Belongs to the EMP24/GP25L family.

It localises to the endoplasmic reticulum membrane. Functionally, involved in vesicular protein trafficking. In Saccharomyces cerevisiae (strain ATCC 204508 / S288c) (Baker's yeast), this protein is Protein ERP3 (ERP3).